The chain runs to 223 residues: Endonuclease NucS (223 aa).

It belongs to the NucS endonuclease family.

The protein resides in the cytoplasm. Cleaves both 3' and 5' ssDNA extremities of branched DNA structures. This Mycobacterium marinum (strain ATCC BAA-535 / M) protein is Endonuclease NucS.